Here is a 1178-residue protein sequence, read N- to C-terminus: Niemann-Pick type C1-related protein (1178 aa).

An N-linked (GlcNAc...) asparagine glycan is attached at Asn41. 2 consecutive transmembrane segments (helical) span residues 157 to 177 (PWLF…GIFL) and 412 to 432 (VVEW…TSVV). Residues 414 to 570 (EWLRLCAAVL…LTFFLAGLSL (157 aa)) enclose the SSD domain. The N-linked (GlcNAc...) asparagine glycan is linked to Asn433. Helical transmembrane passes span 448–468 (GALA…LCGV), 478–498 (PFLA…AYSL), 516–536 (AGLS…IGAL), and 545–565 (FCII…TFFL). The N-linked (GlcNAc...) asparagine glycan is linked to Asn621. Residues 789 to 809 (ATVLVIFAAVTALAIYGATTL) form a helical membrane-spanning segment. 2 N-linked (GlcNAc...) asparagine glycosylation sites follow: Asn917 and Asn943. The next 5 helical transmembrane spans lie at 986–1006 (FTLT…LLLI), 1013–1033 (IIVV…MALI), 1037–1057 (LSMI…DFTI), 1080–1100 (IVMG…ILAL), and 1114–1134 (MMFM…PVVL).

Belongs to the patched family.

It localises to the inner membrane complex. It carries out the reaction cholesterol(in) = cholesterol(out). In terms of biological role, likely facilitates the efflux of cholesterol and gangliosides from membranes. Plays a role in the regulation of lipid homeostasis. This Toxoplasma gondii (strain ATCC 50611 / Me49) protein is Niemann-Pick type C1-related protein.